A 639-amino-acid chain; its full sequence is CD2-associated protein (639 aa).

The region spanning 1-59 (MVDYIVEYDYDAVHDDELTIRVGEIIRNVKKLQEEGWLEGELNGRRGMFPDNFVKEIKR) is the SH3 1; truncated domain. Residues 1–175 (MVDYIVEYDY…EVTDDGETHE (175 aa)) form an interaction with ANLN and localization to the midbody region. Lys58 participates in a covalent cross-link: Glycyl lysine isopeptide (Lys-Gly) (interchain with G-Cter in SUMO2). Phosphoserine is present on residues Ser67, Ser80, and Ser86. One can recognise an SH3 2 domain in the interval 108–167 (TKKRQCKVLFEYIPQNEDELELKVGDIIDINEEVEEGWWSGTLNNKLGLFPSNFVKELEV). Residues 168–177 (TDDGETHEAQ) show a composition bias toward basic and acidic residues. The interval 168-209 (TDDGETHEAQDDSETVLAGPTSPIPSLGNVSETASGSVTQPK) is disordered. The segment covering 195–207 (GNVSETASGSVTQ) has biased composition (polar residues). Ser224 carries the phosphoserine modification. The segment at 227 to 256 (LRTRTSSSETEEKKPEKPLILQSLGPKTQS) is disordered. The SH3 3 domain maps to 269–330 (KAKEYCRTLF…PDNFAVQINE (62 aa)). A disordered region spans residues 333–428 (KDFPKPKKPP…PPPPIAKING (96 aa)). 3 short sequence motifs (SH3-binding) span residues 336–352 (PKPK…APKP), 378–397 (KPSK…PPTK), and 410–422 (PKRP…PPPP). The span at 341 to 351 (PPPPAKAPAPK) shows a compositional bias: pro residues. Residues 356–379 (AAEKKYFSLKPEEKDEKSTLEQKP) are compositionally biased toward basic and acidic residues. Pro residues predominate over residues 385–395 (PQVPPKKPTPP). 5 positions are modified to phosphoserine: Ser458, Ser463, Ser469, Ser510, and Ser514. Lys523 is covalently cross-linked (Glycyl lysine isopeptide (Lys-Gly) (interchain with G-Cter in SUMO2)). Thr565 is subject to Phosphothreonine. Residues 577–638 (DVKKNSLDEL…IEKLKKAVLS (62 aa)) are a coiled coil. Ser582 bears the Phosphoserine mark.

As to quaternary structure, homodimer. Interacts with F-actin, PKD2, NPHS1 and NPHS2. Interacts with WTIP. Interacts with DDN; interaction is direct. Interacts (via SH3 2 domain) with CBL (via phosphorylated C-terminus). Interacts with BCAR1/p130Cas (via SH3 domain). Interacts with MVB12A and ARHGAP17. Interacts with ANLN, CD2 and CBLB. Interacts with PDCD6IP and TSG101. Interacts with RIN3. Interacts directly with RET (inactive) and CBLC; upon RET activation by GDNF suggested to dissociate from RET as CBLC:CD2AP complex. Interacts with CGNL1 and SH3BP1; probably part of a complex at cell junctions. Interacts with CAPZA1. (Microbial infection) Interacts (via SH3 domains) with Chikungunya virus non-structural protein 3 (via C-terminus); this interaction plays a role in initiation of viral replication. Post-translationally, phosphorylated on tyrosine residues; probably by c-Abl, Fyn and c-Src. Widely expressed in fetal and adult tissues.

The protein resides in the cytoplasm. The protein localises to the cytoskeleton. It localises to the cell projection. It is found in the ruffle. Its subcellular location is the cell junction. Its function is as follows. Seems to act as an adapter protein between membrane proteins and the actin cytoskeleton. In collaboration with CBLC, modulates the rate of RET turnover and may act as regulatory checkpoint that limits the potency of GDNF on neuronal survival. Controls CBLC function, converting it from an inhibitor to a promoter of RET degradation. May play a role in receptor clustering and cytoskeletal polarity in the junction between T-cell and antigen-presenting cell. May anchor the podocyte slit diaphragm to the actin cytoskeleton in renal glomerolus. Also required for cytokinesis. Plays a role in epithelial cell junctions formation. This is CD2-associated protein (CD2AP) from Homo sapiens (Human).